Consider the following 665-residue polypeptide: Sodium/glucose cotransporter 1 (665 aa).

Residues 1–24 (MDSSTLSPAVTATDAPIPSYERIR) are Extracellular-facing. A helical membrane pass occupies residues 25–47 (NAADISVIVIYFVVVMAVGLWAM). The Cytoplasmic portion of the chain corresponds to 48–66 (FSTNRGTVGGFFLAGRSMV). Residues 67-90 (WWPIGASLFASNIGSGHFVGLAGT) form a helical membrane-spanning segment. Over 91-95 (GAAAG) the chain is Extracellular. The helical transmembrane segment at 96–117 (IAMGGFEWNALVLVVVLGWIFV) threads the bilayer. Residues 118-139 (PIYIKAGVVTMPEYLRKRFGGK) lie on the Cytoplasmic side of the membrane. The chain crosses the membrane as a helical span at residues 140–169 (RIQIYLSVLSLLLYIFTKISADIFSGAIFI). At 170 to 176 (NLALGLD) the chain is on the extracellular side. The chain crosses the membrane as a helical span at residues 177–193 (IYLAIFILLAITALYTI). Over 194–202 (TGGLAAVIY) the chain is Cytoplasmic. Residues 203-221 (TDTLQTAIMLVGSFILTGF) form a helical membrane-spanning segment. Residues 222–275 (AFNEVGGYEAFMDKYMKAIPTKVSNGNFTAKEECYTPRADSFHIFRDPITGDMP) are Extracellular-facing. N-linked (GlcNAc...) asparagine glycosylation occurs at asparagine 248. 5 disulfides stabilise this stretch: cysteine 255–cysteine 511, cysteine 255–cysteine 611, cysteine 345–cysteine 351, cysteine 355–cysteine 361, and cysteine 517–cysteine 522. A helical transmembrane segment spans residues 276 to 295 (WPGLIFGLAILALWYWCTDQ). Over 296 to 309 (VIVQRCLSAKNMSH) the chain is Cytoplasmic. Residues 310–331 (VKADCTLCGYLKLLPMFLMVMP) traverse the membrane as a helical segment. The Extracellular segment spans residues 332–375 (GMISRILYTEKIACVLPEECQKYCGTPVGCTNIAYPTLVVELMP). A helical transmembrane segment spans residues 376–406 (NGLRGLMLSVMMASLMSSLTSIFNSASTLFT). Residues 407 to 422 (MDIYTKIRKKASEKEL) lie on the Cytoplasmic side of the membrane. A helical membrane pass occupies residues 423 to 444 (MIAGRLFILVLIGISIAWVPIV). Residues 445–451 (QSAQSGQ) are Extracellular-facing. A helical transmembrane segment spans residues 452–477 (LFDYIQSITSYLGPPIAAVFLLAIFC). Glutamine 457 serves as a coordination point for D-glucose. The Cytoplasmic segment spans residues 478-481 (KRVN). A helical membrane pass occupies residues 482–504 (EQGAFWGLILGFLIGISRMITEF). Topologically, residues 505–525 (AYGTGSCMEPSNCPKIICGVH) are extracellular. Residues 526-547 (YLYFAIILFVISVITILIISFL) traverse the membrane as a helical segment. The Cytoplasmic segment spans residues 548-645 (TKPIPDVHLY…TSEKPLWRTV (98 aa)). Residue serine 585 is modified to Phosphoserine. Threonine 588 bears the Phosphothreonine mark. The chain crosses the membrane as a helical span at residues 646-663 (VNINGIILLAVAVFCHAY). Residues 664–665 (FA) lie on the Extracellular side of the membrane.

It belongs to the sodium:solute symporter (SSF) (TC 2.A.21) family. N-glycosylation is not necessary for the cotransporter function. As to expression, expressed in enterocytes and enteroendocrine cells of small intestine (at protein level). Expressed in S3 segments of renal proximal tubules (at protein level). Expressed in endometrial glandular and epithelial cells (at protein level).

Its subcellular location is the apical cell membrane. It carries out the reaction D-glucose(out) + 2 Na(+)(out) = D-glucose(in) + 2 Na(+)(in). The enzyme catalyses D-galactose(out) + 2 Na(+)(out) = D-galactose(in) + 2 Na(+)(in). Enhanced by the interaction with PDZK1IP1/MAP17; but unlike SLC5A2/SGLT2, PDZK1IP1 is not essential for SLC5A1 transporter activity. Possibly modulated by cholesterol binding. Its function is as follows. Electrogenic Na(+)-coupled sugar symporter that actively transports D-glucose or D-galactose at the plasma membrane, with a Na(+) to sugar coupling ratio of 2:1. Transporter activity is driven by a transmembrane Na(+) electrochemical gradient set by the Na(+)/K(+) pump. Has a primary role in the transport of dietary monosaccharides from enterocytes to blood. Responsible for the absorption of D-glucose or D-galactose across the apical brush-border membrane of enterocytes, whereas basolateral exit is provided by GLUT2. Additionally, functions as a D-glucose sensor in enteroendocrine cells, triggering the secretion of the incretins GCG and GIP that control food intake and energy homeostasis. Together with SGLT2, functions in reabsorption of D-glucose from glomerular filtrate, playing a nonredundant role in the S3 segment of the proximal tubules. Transports D-glucose into endometrial epithelial cells, controlling glycogen synthesis and nutritional support for the embryo as well as the decidual transformation of endometrium prior to conception. Acts as a water channel enabling passive water transport in response to the osmotic gradient created upon sugar and Na(+) uptake. Has high water conductivity comparable to aquaporins and therefore is expected to play an important role in transepithelial water permeability, especially in the small intestine. The chain is Sodium/glucose cotransporter 1 (Slc5a1) from Mus musculus (Mouse).